The sequence spans 444 residues: Alpha-(1,3)-fucosyltransferase B (444 aa).

Over 1–6 (MRLAQR) the chain is Cytoplasmic. The helical; Signal-anchor for type II membrane protein transmembrane segment at 7–27 (YGIALVALLMVGATVLFFWSE) threads the bilayer. Topologically, residues 28-444 (NIINYENIKF…GNNCSNSSNT (417 aa)) are lumenal. N-linked (GlcNAc...) asparagine glycosylation is found at Asn279, Asn437, and Asn440.

The protein belongs to the glycosyltransferase 10 family.

Its subcellular location is the golgi apparatus. It localises to the golgi stack membrane. It participates in protein modification; protein glycosylation. The sequence is that of Alpha-(1,3)-fucosyltransferase B (FucTB) from Drosophila melanogaster (Fruit fly).